A 176-amino-acid chain; its full sequence is Adenine phosphoribosyltransferase (176 aa).

Belongs to the purine/pyrimidine phosphoribosyltransferase family. As to quaternary structure, homodimer.

The protein resides in the cytoplasm. It catalyses the reaction AMP + diphosphate = 5-phospho-alpha-D-ribose 1-diphosphate + adenine. The protein operates within purine metabolism; AMP biosynthesis via salvage pathway; AMP from adenine: step 1/1. Catalyzes a salvage reaction resulting in the formation of AMP, that is energically less costly than de novo synthesis. The polypeptide is Adenine phosphoribosyltransferase (Borreliella burgdorferi (strain ATCC 35210 / DSM 4680 / CIP 102532 / B31) (Borrelia burgdorferi)).